A 528-amino-acid chain; its full sequence is UDP-glucuronosyltransferase 2B19 (528 aa).

The signal sequence occupies residues 1–21; sequence MSMKWTSALLLIQLSCYLSFG. Lys-135 is subject to N6-succinyllysine. A glycan (N-linked (GlcNAc...) asparagine) is linked at Asn-315. Residues 493–513 traverse the membrane as a helical segment; sequence VIGFLLACVATVIFIITKCLF.

This sequence belongs to the UDP-glycosyltransferase family. As to expression, expressed in liver, ovary, prostate, colon, kidney, pancreas, brain, cerebellum, mammary gland and epididymis. Not expressed in small intestine, spleen, bladder, adrenal gland and testis.

It is found in the microsome membrane. Its subcellular location is the endoplasmic reticulum membrane. It catalyses the reaction glucuronate acceptor + UDP-alpha-D-glucuronate = acceptor beta-D-glucuronoside + UDP + H(+). In terms of biological role, UDPGT is of major importance in the conjugation and subsequent elimination of potentially toxic xenobiotics and endogenous compounds. This isozyme displays activity toward several classes of xenobiotic substrates: eugenol, 4-methyllumbelliferone, p-nitrophenol, 1-naphthol, p,p'-biphenol, naringenin and o,o'-biphenol. Active also on 3a-hydroxy and 17b-hydroxy positions of steroids. Contributes to the formation of androgen glucuronide in extrahepatic steroid target tissues such as the prostate. In Macaca fascicularis (Crab-eating macaque), this protein is UDP-glucuronosyltransferase 2B19 (UGT2B19).